The following is an 855-amino-acid chain: Oxysterol-binding protein-related protein 3 (855 aa).

The segment at 1–32 (MSDEKNLGVSQKLVSPSRSTSSCSSKQGSRQD) is disordered. Phosphoserine is present on residues S15 and S33. A compositionally biased stretch (low complexity) spans 15 to 31 (SPSRSTSSCSSKQGSRQ). The PH domain maps to 50–145 (PPVQKGFLLK…WVSKLRHHRM (96 aa)). The FFAT 1 signature appears at 161–167 (FFSGSSV). A phosphoserine mark is found at S199, S250, S272, S277, S288, S291, S340, S393, S405, and S408. The segment at 274 to 293 (PNLSTLDFGEEKSYSDGSEA) is disordered. A disordered region spans residues 377-396 (DPPAVPKPGDNLAEENSRDE). Residues 450–454 (LSLDN) carry the FFAT 2 motif. The disordered stretch occupies residues 468–490 (PVLESSGEARSKRRTSLPAPGPN).

The protein belongs to the OSBP family. As to quaternary structure, homodimer. Interacts with RRAS. Interacts (phosphorylated form) with VAPA. Interacts with OSBPL6. In terms of processing, phosphorylation is enhanced in vitro by phorbol-12-myristate-13-acetate (PMA), forskolin and calcium ionophore A23187. Phosphorylation seems to be stimulated in conditions of low cell-cell (or cell-matrix) adhesion. In terms of tissue distribution, expressed in spinal ganglia. Expressed in a subset of small lymphocytes (at protein level).

The protein localises to the endoplasmic reticulum membrane. Its subcellular location is the cytoplasm. It is found in the cytosol. The protein resides in the cell membrane. It localises to the cell projection. The protein localises to the filopodium tip. Its subcellular location is the nucleus membrane. In terms of biological role, phosphoinositide-binding protein which associates with both cell and endoplasmic reticulum (ER) membranes. Can bind to the ER membrane protein VAPA and recruit VAPA to plasma membrane sites, thus linking these intracellular compartments. The ORP3-VAPA complex stimulates RRAS signaling which in turn attenuates integrin beta-1 (ITGB1) activation at the cell surface. With VAPA, may regulate ER morphology. Has a role in regulation of the actin cytoskeleton, cell polarity and cell adhesion. Binds to phosphoinositides with preference for PI(3,4)P2 and PI(3,4,5)P3. Also binds 25-hydroxycholesterol and cholesterol. This chain is Oxysterol-binding protein-related protein 3 (Osbpl3), found in Mus musculus (Mouse).